The sequence spans 2197 residues: Protein sickie (2197 aa).

One can recognise a Calponin-homology (CH) domain in the interval R21–Q129. Disordered stretches follow at residues G165 to Q197, C235 to H311, A331 to H646, G730 to K767, R788 to V910, G1094 to N1119, and T1202 to G1223. Low complexity predominate over residues Q175–Q197. Over residues S261 to R290 the composition is skewed to polar residues. Low complexity predominate over residues P291–P304. Positions A331–Q341 are enriched in polar residues. 2 stretches are compositionally biased toward low complexity: residues S342–A354 and S379–Q398. Residues Q399–N428 show a composition bias toward basic and acidic residues. Composition is skewed to polar residues over residues E429 to S441, A561 to S570, E577 to Y588, and S633 to K644. Low complexity-rich tracts occupy residues G755–G766, S796–N831, and S887–P904. Residues G1100–N1119 show a composition bias toward polar residues. The stretch at Y1262–Q1342 forms a coiled coil. 2 disordered regions span residues Q1373–S1415 and K1455–K1511. 2 stretches are compositionally biased toward polar residues: residues G1379–S1399 and R1406–S1415. Over residues K1455 to H1468 the composition is skewed to basic residues. Residues S1556–T1591 are a coiled coil. Disordered stretches follow at residues S1600 to E1633, C1648 to P1690, and S2172 to E2197. Positions Q1603–E1616 are enriched in polar residues. Residues P1650–P1663 are compositionally biased toward pro residues. A compositionally biased stretch (polar residues) spans L2184–E2197.

The protein belongs to the Nav/unc-53 family.

Its function is as follows. Required for the immune deficiency pathway, which mediates responses to Gram-negative bacterial infection. Favors Rel activation and nuclear translocation. The chain is Protein sickie (sick) from Drosophila melanogaster (Fruit fly).